Reading from the N-terminus, the 394-residue chain is Guanine nucleotide-binding protein G(s) subunit alpha isoforms short (394 aa).

A disordered region spans residues 1–23; sequence MGCLGNSKTEDQRNEEKAQREAN. The N-palmitoyl glycine moiety is linked to residue Gly-2. The S-palmitoyl cysteine moiety is linked to residue Cys-3. A compositionally biased stretch (basic and acidic residues) spans 8-23; sequence KTEDQRNEEKAQREAN. The 356-residue stretch at 39-394 folds into the G-alpha domain; sequence ATHRLLLLGA…RMHLRQYELL (356 aa). Residues 42 to 55 form a G1 motif region; it reads RLLLLGAGESGKST. 47–55 lines the GTP pocket; the sequence is GAGESGKST. Ser-54 contributes to the Mg(2+) binding site. The tract at residues 68–90 is disordered; the sequence is FNGEGGEEDPQAARSNSDGEKAT. The interval 196–204 is G2 motif; it reads DLLRCRVLT. Residues 197 to 204, 223 to 227, and 292 to 295 each bind GTP; these read LLRCRVLT, DVGGQ, and NKQD. Thr-204 is a Mg(2+) binding site. The interval 219-228 is G3 motif; the sequence is FHMFDVGGQR. The G4 motif stretch occupies residues 288–295; that stretch reads ILFLNKQD. Residue Lys-300 forms a Glycyl lysine isopeptide (Lys-Gly) (interchain with G-Cter in ubiquitin) linkage. Ser-352 carries the phosphoserine modification. A G5 motif region spans residues 364–369; it reads TCAVDT. Position 366 (Ala-366) interacts with GTP.

The protein belongs to the G-alpha family. G(s) subfamily. In terms of assembly, heterotrimeric G proteins are composed of 3 units; alpha, beta and gamma. The alpha chain contains the guanine nucleotide binding site. Component of the TAS2R14-GNAS2 complex, consisting of TAS2R14, GNAS2, GNB1 and GNG2; within the complex interacts with TAS2R14; this complex plays a role in the perception of bitterness. Interacts with CRY1; the interaction may block GPCR-mediated regulation of cAMP concentrations. Interacts with ADCY6 and stimulates its adenylyl cyclase activity. Interacts with ADCY2 and ADCY5. Interacts (GDP-bound form) with RIC8B; promoting GNAS folding and association with the plasma membrane. Stimulates the ADCY5 adenylyl cyclase activity. Interaction with SASH1. Interacts with GASL2L2.

It localises to the cell membrane. The enzyme catalyses GTP + H2O = GDP + phosphate + H(+). Its function is as follows. Guanine nucleotide-binding proteins (G proteins) function as transducers in numerous signaling pathways controlled by G protein-coupled receptors (GPCRs). The alpha chain contains the guanine nucleotide binding site and alternates between an active, GTP-bound state and an inactive, GDP-bound state. Signaling by an activated GPCR promotes GDP release and GTP binding. The alpha subunit has a low GTPase activity that converts bound GTP to GDP, thereby terminating the signal. Both GDP release and GTP hydrolysis are modulated by numerous regulatory proteins. Signaling involves the activation of adenylyl cyclases, resulting in increased levels of the signaling molecule cAMP. Functions downstream of beta-adrenergic receptors. Stimulates the Ras signaling pathway via RAPGEF2. This chain is Guanine nucleotide-binding protein G(s) subunit alpha isoforms short (Gnas), found in Mus musculus (Mouse).